Here is a 177-residue protein sequence, read N- to C-terminus: Adenine phosphoribosyltransferase (177 aa).

The protein belongs to the purine/pyrimidine phosphoribosyltransferase family. As to quaternary structure, homodimer.

The protein localises to the cytoplasm. The catalysed reaction is AMP + diphosphate = 5-phospho-alpha-D-ribose 1-diphosphate + adenine. It functions in the pathway purine metabolism; AMP biosynthesis via salvage pathway; AMP from adenine: step 1/1. Functionally, catalyzes a salvage reaction resulting in the formation of AMP, that is energically less costly than de novo synthesis. The sequence is that of Adenine phosphoribosyltransferase from Prosthecochloris aestuarii (strain DSM 271 / SK 413).